Reading from the N-terminus, the 211-residue chain is Arginine exporter protein ArgO (211 aa).

Transmembrane regions (helical) follow at residues 1–21 (MISY…PLGP), 37–57 (LMIA…GIFG), 68–88 (LLAL…FGAL), 111–131 (IIAT…DTFV), 147–167 (WFAL…ALLA), and 179–199 (AQRI…FQLA).

Belongs to the LysE/ArgO transporter (TC 2.A.75) family.

It localises to the cell inner membrane. It catalyses the reaction L-arginine(in) = L-arginine(out). Involved in the export of arginine. Important to control the intracellular level of arginine and the correct balance between arginine and lysine. In Salmonella choleraesuis (strain SC-B67), this protein is Arginine exporter protein ArgO.